A 665-amino-acid chain; its full sequence is Envelope glycoprotein (665 aa).

An N-terminal signal peptide occupies residues 1-33 (MARSTLSKPLKNKVNPRGPLIPLILLMLRGVST). Positions 34–267 (ASPGSSPHQV…RYQNLGPRVP (234 aa)) are receptor-binding domain (RBD). Residues 34–610 (ASPGSSPHQV…FNRSPWFTTL (577 aa)) are Extracellular-facing. The N-linked (GlcNAc...) asparagine; by host glycan is linked to asparagine 45. Intrachain disulfides connect cysteine 79–cysteine 129, cysteine 105–cysteine 118, cysteine 106–cysteine 114, cysteine 152–cysteine 172, and cysteine 164–cysteine 177. Aspartate 117 contacts Zn(2+). An N-linked (GlcNAc...) asparagine; by host glycan is attached at asparagine 199. A disulfide bridge connects residues cysteine 209 and cysteine 215. Residues 268–309 (IGPNPVLADQQPLSKPKPVKSPSVTKPPSGTPLSPTQLPPAG) form a disordered region. The segment covering 281–299 (SKPKPVKSPSVTKPPSGTP) has biased composition (low complexity). A glycan (N-linked (GlcNAc...) asparagine; by host) is linked at asparagine 326. 6 cysteine pairs are disulfide-bonded: cysteine 336–cysteine 339, cysteine 336–cysteine 563, cysteine 366–cysteine 420, cysteine 385–cysteine 397, cysteine 427–cysteine 440, and cysteine 555–cysteine 562. Residues 336-339 (CWLC) carry the CXXC motif. Asparagine 358 and asparagine 365 each carry an N-linked (GlcNAc...) asparagine; by host glycan. N-linked (GlcNAc...) asparagine; by host glycosylation is found at asparagine 398 and asparagine 434. Residues 472–492 (VSLTLALLLGGLTMGGIAAGI) are fusion peptide. A coiled-coil region spans residues 500 to 537 (MATQQFQQLQAAVQDDLREVEKSISNLEKSLTSLSEVV). An immunosuppression region spans residues 538–554 (LQNRRGLDLLFLKEGGL). The CX6CC signature appears at 555 to 563 (CAALKEECC). A helical membrane pass occupies residues 611-631 (ISTIMGPLIVLLMILLFGPCI). A lipid anchor (S-palmitoyl cysteine; by host) is attached at cysteine 630. The Cytoplasmic portion of the chain corresponds to 632–665 (LNRLVQFVKDRISVVQALVLTQQYHQLKPIEYEP). Residues 655-658 (YHQL) carry the YXXL motif; contains endocytosis signal motif.

As to quaternary structure, the mature envelope protein (Env) consists of a trimer of SU-TM heterodimers attached by a labile interchain disulfide bond. The activated Env consists of SU monomers and TM trimers. Post-translationally, specific enzymatic cleavages in vivo yield mature proteins. Envelope glycoproteins are synthesized as an inactive precursor that is N-glycosylated and processed likely by host cell furin or by a furin-like protease in the Golgi to yield the mature SU and TM proteins. The cleavage site between SU and TM requires the minimal sequence [KR]-X-[KR]-R. The R-peptide is released from the C-terminus of the cytoplasmic tail of the TM protein upon particle formation as a result of proteolytic cleavage by the viral protease. Cleavage of this peptide is required for TM to become fusogenic. In terms of processing, the CXXC motif is highly conserved across a broad range of retroviral envelope proteins. It is thought to participate in the formation of a labile disulfide bond possibly with the CX6CC motif present in the transmembrane protein. Isomerization of the intersubunit disulfide bond to an SU intrachain disulfide bond is thought to occur upon receptor recognition in order to allow membrane fusion. The transmembrane protein is palmitoylated. Post-translationally, the R-peptide is palmitoylated.

Its subcellular location is the virion membrane. It localises to the host cell membrane. The surface protein (SU) attaches the virus to the host cell by binding to its receptor. Interaction with HECT ubiquitin ligases activates a thiol in a CXXC motif of the C-terminal domain, where the other Cys residue participates in the formation of the intersubunit disulfide. The activated thiol will attack the disulfide and cause its isomerization into a disulfide isomer within the motif. This leads to SU displacement and TM refolding, and is thought to activate its fusogenic potential by unmasking its fusion peptide. Fusion occurs at the host cell plasma membrane. Its function is as follows. The transmembrane protein (TM) acts as a class I viral fusion protein. Under the current model, the protein has at least 3 conformational states: pre-fusion native state, pre-hairpin intermediate state, and post-fusion hairpin state. During viral and target cell membrane fusion, the coiled coil regions (heptad repeats) assume a trimer-of-hairpins structure, positioning the fusion peptide in close proximity to the C-terminal region of the ectodomain. The formation of this structure appears to drive apposition and subsequent fusion of viral and target cell membranes. Membranes fusion leads to delivery of the nucleocapsid into the cytoplasm. This chain is Envelope glycoprotein (env), found in Mus musculus (Mouse).